The sequence spans 273 residues: Undecaprenyl-diphosphatase (273 aa).

7 helical membrane-spanning segments follow: residues 6–26, 45–65, 90–110, 116–136, 190–210, 222–242, and 252–272; these read SLLI…LPVS, AKTF…VMFW, LTLI…LLFH, LFNP…LIAA, YAAS…ATAL, GDIP…LIAI, and ISFI…YVVF.

This sequence belongs to the UppP family.

The protein resides in the cell inner membrane. It carries out the reaction di-trans,octa-cis-undecaprenyl diphosphate + H2O = di-trans,octa-cis-undecaprenyl phosphate + phosphate + H(+). Catalyzes the dephosphorylation of undecaprenyl diphosphate (UPP). Confers resistance to bacitracin. The chain is Undecaprenyl-diphosphatase from Escherichia coli O7:K1 (strain IAI39 / ExPEC).